A 380-amino-acid polypeptide reads, in one-letter code: Glycogenin-2 (380 aa).

Leu10, Tyr16, and Arg95 together coordinate UDP. Residues Leu10, Tyr16, Arg95, Lys104, Asp120, Ala121, Asp122, Asn158, Thr159, Asp185, Asp188, and Gln189 each coordinate UDP-alpha-D-glucose. UDP-binding residues include Asp120, Ala121, and Asp122. Asp120 contacts Mn(2+). Position 122 (Asp122) interacts with Mn(2+). Tyr230 and Tyr232 each carry an O-linked (Glc...) tyrosine glycan. UDP contacts are provided by His249, Gly252, and Lys255. Residue His249 participates in Mn(2+) binding. UDP-alpha-D-glucose is bound by residues Gly252 and Lys255. The segment at 331–357 (SVDRNASQKSTAEKHDIEKPTSKPQSA) is disordered. Residues 341–351 (TAEKHDIEKPT) are compositionally biased toward basic and acidic residues. A glycan (O-linked (Glc...) tyrosine) is linked at Tyr367.

This sequence belongs to the glycosyltransferase 8 family. Glycogenin subfamily. As to quaternary structure, interacts with glycogen synthase GSY2. The cofactor is Mn(2+).

The protein localises to the cytoplasm. Its subcellular location is the vacuole. The enzyme catalyses L-tyrosyl-[glycogenin] + UDP-alpha-D-glucose = alpha-D-glucosyl-L-tyrosyl-[glycogenin] + UDP + H(+). The catalysed reaction is [1,4-alpha-D-glucosyl](n)-L-tyrosyl-[glycogenin] + UDP-alpha-D-glucose = [1,4-alpha-D-glucosyl](n+1)-L-tyrosyl-[glycogenin] + UDP + H(+). In terms of biological role, self-glucosylating initiator of glycogen synthesis. It catalyzes the formation of a short alpha (1,4)-glucosyl chain covalently attached via a glucose 1-O-tyrosyl linkage to internal tyrosine residues and these chains act as primers for the elongation reaction catalyzed by glycogen synthase. Capable of transferring glucosyl residues to unbound acceptors such as free oligoglucans or oligoglucan derivatives. In Saccharomyces cerevisiae (strain YJM789) (Baker's yeast), this protein is Glycogenin-2 (GLG2).